We begin with the raw amino-acid sequence, 178 residues long: Cytidylate kinase 2 (178 aa).

7-15 lines the ATP pocket; it reads GKSGCGNTT.

The protein belongs to the cytidylate kinase family. Type 2 subfamily.

It localises to the cytoplasm. The enzyme catalyses CMP + ATP = CDP + ADP. It catalyses the reaction dCMP + ATP = dCDP + ADP. The sequence is that of Cytidylate kinase 2 from Borrelia garinii subsp. bavariensis (strain ATCC BAA-2496 / DSM 23469 / PBi) (Borreliella bavariensis).